The chain runs to 583 residues: Membrane protein insertase YidC (583 aa).

Transmembrane regions (helical) follow at residues 5–25 (SVTG…FMSP), 341–361 (PFAE…VSNY), 362–382 (GLII…LSMA), 427–447 (IGGC…FYVF), 473–493 (FGFA…LMAV), and 520–540 (AMML…YLMF).

Belongs to the OXA1/ALB3/YidC family. Type 1 subfamily. As to quaternary structure, interacts with the Sec translocase complex via SecD. Specifically interacts with transmembrane segments of nascent integral membrane proteins during membrane integration.

It is found in the cell inner membrane. Required for the insertion and/or proper folding and/or complex formation of integral membrane proteins into the membrane. Involved in integration of membrane proteins that insert both dependently and independently of the Sec translocase complex, as well as at least some lipoproteins. Aids folding of multispanning membrane proteins. This is Membrane protein insertase YidC from Pelodictyon phaeoclathratiforme (strain DSM 5477 / BU-1).